Here is a 221-residue protein sequence, read N- to C-terminus: MADLKVGSTTGGSVIWHQGNFPLNPAGDDVLYKSFKIYSEYNKPQAADNDFVSKANGGTYASKVTFNAGIQVPYAPNIMSPCGIYGGNGDGATFDKANIDIVSWYGVGFKSSFGSTGRTVVINTRNGDINTKGVVSAAGQVRSGAAAPIAANDLTRKDYVDGAINTVTANANSRVLRSGDTMTGNLTAPNFFSQNPASQPSHVPRFDQIVIKDSVQDFGYY.

It belongs to the tevenvirinae tail fiber protein p36 family. As to quaternary structure, the long-tail fibers are trimeric, with a stoichiometry of gp34/gp37/gp36/gp35 of 3:3:3:1.

The protein localises to the virion. Functionally, structural component of the distal-half of the long-tail fiber. The long-tail fiber of T4 is about 1600 Angstroms long with a kink in the middle that divides the fiber into proximal and distal halves. The thin tip of the distal half-fiber interacts with the bacterial lipopolysaccharide receptor and specifies the host range of the phage. The sequence is that of Long-tail fiber protein gp36 (36) from Escherichia coli (Bacteriophage T4).